We begin with the raw amino-acid sequence, 280 residues long: Fructose-1,6-bisphosphatase class 1 (280 aa).

Positions 64, 83, 85, and 86 each coordinate Mg(2+). Residues 86–89, Y189, and K220 each bind substrate; that span reads DGSS. E226 lines the Mg(2+) pocket.

The protein belongs to the FBPase class 1 family. As to quaternary structure, homotetramer. Requires Mg(2+) as cofactor.

The protein localises to the cytoplasm. The catalysed reaction is beta-D-fructose 1,6-bisphosphate + H2O = beta-D-fructose 6-phosphate + phosphate. The protein operates within carbohydrate biosynthesis; gluconeogenesis. The sequence is that of Fructose-1,6-bisphosphatase class 1 from Campylobacter jejuni subsp. jejuni serotype O:6 (strain 81116 / NCTC 11828).